The primary structure comprises 89 residues: Small ribosomal subunit protein uS14 (89 aa).

Cys52, Cys55, Cys68, and Cys71 together coordinate Zn(2+).

This sequence belongs to the universal ribosomal protein uS14 family. In terms of assembly, part of the 30S ribosomal subunit. Contacts proteins S3 and S10. Zn(2+) serves as cofactor.

Functionally, binds 16S rRNA, required for the assembly of 30S particles and may also be responsible for determining the conformation of the 16S rRNA at the A site. The protein is Small ribosomal subunit protein uS14 (rpsN) of Salinibacter ruber (strain DSM 13855 / M31).